The primary structure comprises 237 residues: uncharacterized protein (237 aa).

The region spanning 4 to 237 (QFLIAHRGYS…VKFQIAAQLY (234 aa)) is the GP-PDE domain.

It to glycerophosphoryl diester phosphodiesterases (EC 3.1.4.46). The protein to M.genitalium MG293.

This is an uncharacterized protein from Mycoplasma pneumoniae (strain ATCC 29342 / M129 / Subtype 1) (Mycoplasmoides pneumoniae).